A 292-amino-acid chain; its full sequence is Homeobox-leucine zipper protein HOX19 (292 aa).

Disordered regions lie at residues 14 to 85, 99 to 133, and 217 to 236; these read LALG…HSVS, RERA…RLTK, and FAPP…PPAP. A compositionally biased stretch (low complexity) spans 28 to 74; that stretch reads TDAAAAHRGGCRRPSPSSQCPPLEPSLTLSLPDDAAAGAAATATATA. The span at 99–109 shows a compositional bias: basic and acidic residues; the sequence is RERAEEADGER. The homeobox DNA-binding region spans 124–183; that stretch reads STRKKLRLTKEQSALLEDRFREHSTLNPKQKVALAKQLNLRPRQVEVWFQNRRARTKLKQ. The segment at 182 to 226 is leucine-zipper; the sequence is KQTEVDCEFLKRCCETLTEENRRLQRELQELRALKFAPPPPSSAA.

The protein belongs to the HD-ZIP homeobox family. Class II subfamily. As to expression, expressed in seedlings, roots, stems, leaf sheaths and blades and panicles.

Its subcellular location is the nucleus. In terms of biological role, probable transcription factor. In Oryza sativa subsp. japonica (Rice), this protein is Homeobox-leucine zipper protein HOX19 (HOX19).